We begin with the raw amino-acid sequence, 745 residues long: Mediator of RNA polymerase II transcription subunit 25 (745 aa).

The tract at residues 1–226 (MVPGSEGPAR…PRHMVLVRGL (226 aa)) is interaction with the Mediator complex. Residues 233–243 (SSTSGSLQTKQ) show a composition bias toward polar residues. Disordered regions lie at residues 233–266 (SSTS…QALP) and 299–374 (LGPR…VTPG). A compositionally biased stretch (low complexity) spans 252-262 (ASAATLSAAPP). Pro residues predominate over residues 324–342 (PAPPLAPVPPGAPKPPPAS). Residues 389–543 (LGGQQSVSNK…VNGIRQVITN (155 aa)) are interaction with VP16. Positions 395–545 (VSNKLLAWSG…GIRQVITNHK (151 aa)) are interaction with CREBBP. Interaction with RARA regions lie at residues 563-652 (APPV…LLNP) and 639-705 (PGAN…WPTQ). The disordered stretch occupies residues 584 to 738 (LRAPQPQPQG…PGLQPSVMED (155 aa)). Low complexity predominate over residues 596 to 617 (GASAATGQPQPQGATQAPTGAP). Residues 618–631 (QGPPGAAPGPPPSG) are compositionally biased toward pro residues. Residues 645–649 (LRSLL) carry the LXXLL motif motif. Positions 652 to 663 (PAPPQTGVPPPQ) are enriched in pro residues. Arg-723 carries the asymmetric dimethylarginine modification.

The protein belongs to the Mediator complex subunit 25 family. Component of the Mediator complex, which is composed of MED1, MED4, MED6, MED7, MED8, MED9, MED10, MED11, MED12, MED13, MED13L, MED14, MED15, MED16, MED17, MED18, MED19, MED20, MED21, MED22, MED23, MED24, MED25, MED26, MED27, MED29, MED30, MED31, CCNC, CDK8 and CDC2L6/CDK11. The MED12, MED13, CCNC and CDK8 subunits form a distinct module termed the CDK8 module. Mediator containing the CDK8 module is less active than Mediator lacking this module in supporting transcriptional activation. Individual preparations of the Mediator complex lacking one or more distinct subunits have been variously termed ARC, CRSP, DRIP, PC2, SMCC and TRAP. Interacts with CREBBP. Interacts with ESR1, GR and THRB in a ligand-dependent fashion. Binds the Herpes simplex virus activator VP16. Interacts with RARA and RXRA in a ligand-dependent fashion.

The protein localises to the nucleus. Its function is as follows. Component of the Mediator complex, a coactivator involved in the regulated transcription of nearly all RNA polymerase II-dependent genes. Mediator functions as a bridge to convey information from gene-specific regulatory proteins to the basal RNA polymerase II transcription machinery. Mediator is recruited to promoters by direct interactions with regulatory proteins and serves as a scaffold for the assembly of a functional preinitiation complex with RNA polymerase II and the general transcription factors. Required for RARA/RXRA-mediated transcription. In Mus musculus (Mouse), this protein is Mediator of RNA polymerase II transcription subunit 25 (Med25).